A 478-amino-acid polypeptide reads, in one-letter code: G2/mitotic-specific cyclin-B (478 aa).

The disordered stretch occupies residues 1 to 153 (MNENDENGPS…KTIQQEEPPR (153 aa)). A compositionally biased stretch (low complexity) spans 16 to 31 (AKAAALTTDAPAANGA). Residues 65–74 (DNGETKDAKK) are compositionally biased toward basic and acidic residues. Residues 77–102 (SKTGLTSKATMQSGGVQKLSRSNLSR) show a composition bias toward polar residues. Residues 110–121 (NNVKKPATEAKR) are compositionally biased toward basic and acidic residues. Over residues 133-145 (KRTSSQKSLQEKT) the composition is skewed to polar residues.

The protein belongs to the cyclin family. Cyclin AB subfamily.

In terms of biological role, essential for the control of the cell cycle at the G2/M (mitosis) transition. Interacts with the CDC2 protein kinase to form MPF. G2/M cyclins accumulate steadily during G2 and are abruptly destroyed at mitosis. The polypeptide is G2/mitotic-specific cyclin-B (nimE) (Emericella nidulans (strain FGSC A4 / ATCC 38163 / CBS 112.46 / NRRL 194 / M139) (Aspergillus nidulans)).